We begin with the raw amino-acid sequence, 435 residues long: E3 ubiquitin-protein ligase RNFT1 (435 aa).

A disordered region spans residues 1 to 62 (MPLFLLSLPT…SSEDASTPQC (62 aa)). Positions 16 to 34 (GHERRQRPEAKTSGSEKKY) are enriched in basic and acidic residues. The segment covering 40–62 (ANRSQLHSPPGTGSSEDASTPQC) has biased composition (polar residues). 6 consecutive transmembrane segments (helical) span residues 158-178 (ILIL…LGIG), 203-223 (IQCA…YYTF), 233-253 (IFLN…IVGI), 256-276 (FILK…PSFI), 298-318 (TFVP…FGNV), and 323-343 (LGIL…FGHL). The segment at 368 to 419 (CSDVDDICSICQAEFQKPILLICQHIFCEECMTLWFNREKTCPLCRTVISDH) is required for ubiquitin ligase activity and for protection against ER stress-induced cell death. Residues 375 to 413 (CSICQAEFQKPILLICQHIFCEECMTLWFNREKTCPLCR) form an RING-type zinc finger.

In terms of tissue distribution, expressed at highest levels in testis, lower levels in heart, liver, lung, and kidney. Not detected in brain, ovary, and uterus. Down-regulated in testis from patients with maturation arrest (MA) or Sertoli cell-only syndrome (SCOS). Ubiquitously expressed with high expression in testis.

It localises to the endoplasmic reticulum membrane. It catalyses the reaction S-ubiquitinyl-[E2 ubiquitin-conjugating enzyme]-L-cysteine + [acceptor protein]-L-lysine = [E2 ubiquitin-conjugating enzyme]-L-cysteine + N(6)-ubiquitinyl-[acceptor protein]-L-lysine.. The protein operates within protein modification; protein ubiquitination. Its function is as follows. E3 ubiquitin-protein ligase that acts in the endoplasmic reticulum (ER)-associated degradation (ERAD) pathway, which targets misfolded proteins that accumulate in the endoplasmic reticulum (ER) for ubiquitination and subsequent proteasome-mediated degradation. Protects cells from ER stress-induced apoptosis. The protein is E3 ubiquitin-protein ligase RNFT1 (RNFT1) of Homo sapiens (Human).